Here is a 456-residue protein sequence, read N- to C-terminus: Glycine receptor subunit alpha-4 (456 aa).

The signal sequence occupies residues 1–27 (MTTLVPASLFLLLWTLPGKVLLSVALA). The Extracellular segment spans residues 28–256 (KEDVKSGLKG…KFHLERQMGY (229 aa)). A glycan (N-linked (GlcNAc...) asparagine) is linked at asparagine 71. 2 cysteine pairs are disulfide-bonded: cysteine 171–cysteine 185 and cysteine 232–cysteine 243. A strychnine-binding site is contributed by 236–241 (YNTGKF). Residues 257–278 (YLIQMYIPSLLIVILSWVSFWI) form a helical membrane-spanning segment. Over 279 to 283 (NMDAA) the chain is Cytoplasmic. Residues 284–304 (PARVGLGITTVLTMTTQSSGS) form a helical membrane-spanning segment. Residues 305–315 (RASLPKVSYVK) are Extracellular-facing. The helical transmembrane segment at 316–336 (AIDIWMAVCLLFVFAALLEYA) threads the bilayer. At 337–423 (AVNFVSRQHK…YVDRAKRIDT (87 aa)) the chain is on the cytoplasmic side. The helical transmembrane segment at 424–444 (ISRAVFPFTFLVFNIFYWVVY) threads the bilayer. Residues 445-456 (KVLRSEDIHQAL) lie on the Extracellular side of the membrane.

It belongs to the ligand-gated ion channel (TC 1.A.9) family. Glycine receptor (TC 1.A.9.3) subfamily. GLRA4 sub-subfamily. As to quaternary structure, homopentamer (in vitro). Heteropentamer composed of GLRA4 and GLRB. Detected in the retina inner plexiform layer, especially at the border between layer three and four (at protein level).

Its subcellular location is the postsynaptic cell membrane. The protein resides in the synapse. It localises to the perikaryon. The protein localises to the cell projection. It is found in the dendrite. Its subcellular location is the cell membrane. It carries out the reaction chloride(in) = chloride(out). With respect to regulation, inhibited by strychnine. Its function is as follows. Glycine receptors are ligand-gated chloride channels. Channel opening is triggered by extracellular glycine. Channel opening is also triggered by taurine and beta-alanine. Plays a role in the down-regulation of neuronal excitability. Contributes to the generation of inhibitory postsynaptic currents. In Mus musculus (Mouse), this protein is Glycine receptor subunit alpha-4 (Glra4).